Consider the following 123-residue polypeptide: uncharacterized protein (123 aa).

2 helical membrane-spanning segments follow: residues 53–73 (VWFLFLFFIASHINILFFFFL) and 75–95 (VLWFLWCYLCSGLFLFDVFSH).

The protein localises to the membrane. This is an uncharacterized protein from Saccharomyces cerevisiae (strain ATCC 204508 / S288c) (Baker's yeast).